The sequence spans 378 residues: MVWGKICWFSQRAGWTVFAESQISLSCSLCLHSGDQEAQNPNLVSQLCGVFLQNETNETIHMQMSMAVGQQALPLNIIAPKAVLVSLCGVLLNGTVFWLLCCGATNPYMVYILHLVAADVIYLCCSAVGFLQVTLLTYHGVVFFIPDFLAILSPFSFEVCLCLLVAISTERCVCVLFPIWYRCHRPKYTSNVVCTLIWGLPFCINIVKSLFLTYWKHVKACVIFLKLSGLFHAILSLVMCVSSLTLLIRFLCCSQQQKATRVYAVVQISAPMFLLWALPLSVAPLITDFKMFVTTSYLISLFLIINSSANPIIYFFVGSLRKKRLKESLRVILQRALADKPEVGRNKKAAGIDPMEQPHSTQHVENLLPREHRVDVET.

The Extracellular portion of the chain corresponds to 1–77 (MVWGKICWFS…VGQQALPLNI (77 aa)). N-linked (GlcNAc...) asparagine glycans are attached at residues asparagine 54 and asparagine 57. A helical membrane pass occupies residues 78 to 101 (IAPKAVLVSLCGVLLNGTVFWLLC). Residues 102–109 (CGATNPYM) lie on the Cytoplasmic side of the membrane. Residues 110 to 136 (VYILHLVAADVIYLCCSAVGFLQVTLL) form a helical membrane-spanning segment. The Extracellular portion of the chain corresponds to 137–154 (TYHGVVFFIPDFLAILSP). The helical transmembrane segment at 155 to 169 (FSFEVCLCLLVAIST) threads the bilayer. The Cytoplasmic portion of the chain corresponds to 170-191 (ERCVCVLFPIWYRCHRPKYTSN). The chain crosses the membrane as a helical span at residues 192 to 207 (VVCTLIWGLPFCINIV). At 208-221 (KSLFLTYWKHVKAC) the chain is on the extracellular side. A helical transmembrane segment spans residues 222-248 (VIFLKLSGLFHAILSLVMCVSSLTLLI). Topologically, residues 249 to 264 (RFLCCSQQQKATRVYA) are cytoplasmic. A helical transmembrane segment spans residues 265–286 (VVQISAPMFLLWALPLSVAPLI). At 287–297 (TDFKMFVTTSY) the chain is on the extracellular side. A helical membrane pass occupies residues 298 to 317 (LISLFLIINSSANPIIYFFV). At 318-378 (GSLRKKRLKE…PREHRVDVET (61 aa)) the chain is on the cytoplasmic side. The interval 344-378 (GRNKKAAGIDPMEQPHSTQHVENLLPREHRVDVET) is disordered. The span at 368–378 (LPREHRVDVET) shows a compositional bias: basic and acidic residues.

Belongs to the G-protein coupled receptor 1 family. Mas subfamily.

Its subcellular location is the cell membrane. This is Mas-related G-protein coupled receptor MRG (MAS1L) from Homo sapiens (Human).